A 397-amino-acid chain; its full sequence is MSDTLLNPYFGEFGGMYVPEILVPVLKQLEQAFVEAQNDPTFQAEFADLLKNYAGRPTALTLCRNLTKCTKTKLYLKREDLLHGGAHKTNQVLGQILLAKRMGKTRIIAETGAGQHGVATALACAMLDMPCRVYMGAKDVERQSPNVFRMRLMGAEVIPVEKGSCSLKDACCEAMRDWSANYETTHYLLGTAAGPHPFPTIVREFQKMIGEETKRQILEREGRLPDAVIAAVGGGSNAIGMFTDFIDEPNVRLIGVEPAGKGIESGEHGAPLGHAKVGIYFGMKSPLMQTEDGQVEESYSVSAGLDFPSVGPQHAYLNEIGRADYVSITDEEALNAFQELAKHEGIIPALESSHALAYALKLIKQNPEKEQLLVVNLSGRGDKDIFTVDKILNGGTN.

K88 carries the N6-(pyridoxal phosphate)lysine modification.

The protein belongs to the TrpB family. Tetramer of two alpha and two beta chains. Requires pyridoxal 5'-phosphate as cofactor.

It carries out the reaction (1S,2R)-1-C-(indol-3-yl)glycerol 3-phosphate + L-serine = D-glyceraldehyde 3-phosphate + L-tryptophan + H2O. Its pathway is amino-acid biosynthesis; L-tryptophan biosynthesis; L-tryptophan from chorismate: step 5/5. The beta subunit is responsible for the synthesis of L-tryptophan from indole and L-serine. This is Tryptophan synthase beta chain from Haemophilus influenzae (strain 86-028NP).